A 518-amino-acid polypeptide reads, in one-letter code: 12S seed storage globulin 1 (518 aa).

The signal sequence occupies residues 1–24 (MATTRFPSLLFYSCIFLLCNGSMA). Intrachain disulfides connect cysteine 45–cysteine 78 and cysteine 121–cysteine 324. The Cupin type-1 1 domain occupies 50-240 (LQAFEPLRQV…ALGISQQAAQ (191 aa)). Residues 281 to 295 (QSQQEQSTQYQVGQS) are compositionally biased toward low complexity. The interval 281 to 311 (QSQQEQSTQYQVGQSPQYQEGQSTQYQSGQS) is disordered. Positions 296–311 (PQYQEGQSTQYQSGQS) are enriched in polar residues. A Cupin type-1 2 domain is found at 330 to 479 (QNIENPKRAD…AYRISRQESQ (150 aa)). A disordered region spans residues 496 to 518 (FAQTGSQSYQDEGESSSTEKASE).

This sequence belongs to the 11S seed storage protein (globulins) family. As to quaternary structure, hexamer; each subunit is composed of an acidic and a basic chain derived from a single precursor and linked by a disulfide bond.

Functionally, this is a seed storage protein. The protein is 12S seed storage globulin 1 of Avena sativa (Oat).